A 289-amino-acid chain; its full sequence is 4-hydroxy-tetrahydrodipicolinate synthase (289 aa).

A pyruvate-binding site is contributed by T43. The Proton donor/acceptor role is filled by Y131. The active-site Schiff-base intermediate with substrate is K160. Residue I200 participates in pyruvate binding.

Belongs to the DapA family. Homotetramer; dimer of dimers.

It is found in the cytoplasm. The enzyme catalyses L-aspartate 4-semialdehyde + pyruvate = (2S,4S)-4-hydroxy-2,3,4,5-tetrahydrodipicolinate + H2O + H(+). The protein operates within amino-acid biosynthesis; L-lysine biosynthesis via DAP pathway; (S)-tetrahydrodipicolinate from L-aspartate: step 3/4. Its function is as follows. Catalyzes the condensation of (S)-aspartate-beta-semialdehyde [(S)-ASA] and pyruvate to 4-hydroxy-tetrahydrodipicolinate (HTPA). In Methanococcus vannielii (strain ATCC 35089 / DSM 1224 / JCM 13029 / OCM 148 / SB), this protein is 4-hydroxy-tetrahydrodipicolinate synthase.